Reading from the N-terminus, the 137-residue chain is AVCVSLLGAANIPPHPLNLINFMEMIRYTIPCEKTWGEYADYGCYCGAGGSGRPIDALDRCCYVHDNCYGDAANIRDCNPKTQSYSYKLTKRTIICYGAAGTCARVVCDCDRTAALCFGDSEYIEGHKNIDTARFCQ.

Positions 1-9 are cleaved as a signal peptide; the sequence is AVCVSLLGA. A propeptide spanning residues 10–17 is cleaved from the precursor; that stretch reads ANIPPHPL. Intrachain disulfides connect Cys-44–Cys-136, Cys-46–Cys-62, Cys-61–Cys-117, Cys-68–Cys-110, Cys-78–Cys-103, and Cys-96–Cys-108. Positions 45, 47, and 49 each coordinate Ca(2+). His-65 is an active-site residue. Asp-66 is a Ca(2+) binding site. Asp-111 is an active-site residue.

It belongs to the phospholipase A2 family. Group I subfamily. D49 sub-subfamily. As to quaternary structure, heterodimer; disulfide-linked. The A chain has phospholipase A2 activity and the B chain shows homology with the basic protease inhibitors. It depends on Ca(2+) as a cofactor. As to expression, expressed by the venom gland.

The protein resides in the secreted. It catalyses the reaction a 1,2-diacyl-sn-glycero-3-phosphocholine + H2O = a 1-acyl-sn-glycero-3-phosphocholine + a fatty acid + H(+). Beta bungarotoxin is a presynaptic neurotoxin. The A chain has phospholipase activity. PLA2 catalyzes the calcium-dependent hydrolysis of the 2-acyl groups in 3-sn-phosphoglycerides. The protein is Acidic phospholipase A2 beta-bungarotoxin A chain of Bungarus candidus (Malayan krait).